The sequence spans 363 residues: Phosphoserine aminotransferase (363 aa).

R42 lines the L-glutamate pocket. Pyridoxal 5'-phosphate-binding positions include 76–77, W101, T151, D170, and Q193; that span reads AS. K194 is modified (N6-(pyridoxal phosphate)lysine). 234–235 serves as a coordination point for pyridoxal 5'-phosphate; it reads NT.

Belongs to the class-V pyridoxal-phosphate-dependent aminotransferase family. SerC subfamily. As to quaternary structure, homodimer. It depends on pyridoxal 5'-phosphate as a cofactor.

It is found in the cytoplasm. It catalyses the reaction O-phospho-L-serine + 2-oxoglutarate = 3-phosphooxypyruvate + L-glutamate. It carries out the reaction 4-(phosphooxy)-L-threonine + 2-oxoglutarate = (R)-3-hydroxy-2-oxo-4-phosphooxybutanoate + L-glutamate. Its pathway is amino-acid biosynthesis; L-serine biosynthesis; L-serine from 3-phospho-D-glycerate: step 2/3. Its function is as follows. Catalyzes the reversible conversion of 3-phosphohydroxypyruvate to phosphoserine and of 3-hydroxy-2-oxo-4-phosphonooxybutanoate to phosphohydroxythreonine. The chain is Phosphoserine aminotransferase from Listeria monocytogenes serovar 1/2a (strain ATCC BAA-679 / EGD-e).